The primary structure comprises 1342 residues: DNA-directed RNA polymerase subunit beta (1342 aa).

Lys1022 and Lys1200 each carry N6-acetyllysine.

This sequence belongs to the RNA polymerase beta chain family. As to quaternary structure, the RNAP catalytic core consists of 2 alpha, 1 beta, 1 beta' and 1 omega subunit. When a sigma factor is associated with the core the holoenzyme is formed, which can initiate transcription.

It catalyses the reaction RNA(n) + a ribonucleoside 5'-triphosphate = RNA(n+1) + diphosphate. Its function is as follows. DNA-dependent RNA polymerase catalyzes the transcription of DNA into RNA using the four ribonucleoside triphosphates as substrates. The sequence is that of DNA-directed RNA polymerase subunit beta from Shigella flexneri serotype 5b (strain 8401).